The sequence spans 467 residues: Ribulose bisphosphate carboxylase large chain (467 aa).

Positions 1–2 (MS) are excised as a propeptide. Position 3 is an N-acetylproline (Pro3). N6,N6,N6-trimethyllysine is present on Lys14. Substrate is bound by residues Asn123 and Thr173. Catalysis depends on Lys175, which acts as the Proton acceptor. Substrate is bound at residue Lys177. Mg(2+) is bound by residues Lys201, Asp203, and Glu204. Residue Lys201 is modified to N6-carboxylysine. Residue His294 is the Proton acceptor of the active site. Residues Arg295, His327, and Ser379 each contribute to the substrate site.

It belongs to the RuBisCO large chain family. Type I subfamily. In terms of assembly, heterohexadecamer of 8 large chains and 8 small chains; disulfide-linked. The disulfide link is formed within the large subunit homodimers. Mg(2+) is required as a cofactor. The disulfide bond which can form in the large chain dimeric partners within the hexadecamer appears to be associated with oxidative stress and protein turnover.

It is found in the plastid. Its subcellular location is the chloroplast. The enzyme catalyses 2 (2R)-3-phosphoglycerate + 2 H(+) = D-ribulose 1,5-bisphosphate + CO2 + H2O. The catalysed reaction is D-ribulose 1,5-bisphosphate + O2 = 2-phosphoglycolate + (2R)-3-phosphoglycerate + 2 H(+). Its function is as follows. RuBisCO catalyzes two reactions: the carboxylation of D-ribulose 1,5-bisphosphate, the primary event in carbon dioxide fixation, as well as the oxidative fragmentation of the pentose substrate in the photorespiration process. Both reactions occur simultaneously and in competition at the same active site. In Calamus usitatus (Palm tree), this protein is Ribulose bisphosphate carboxylase large chain.